Consider the following 355-residue polypeptide: 3-isopropylmalate dehydrogenase (355 aa).

Substrate contacts are provided by arginine 98, arginine 108, arginine 132, and aspartate 223. Mg(2+) contacts are provided by aspartate 223, aspartate 247, and aspartate 251. 283–295 lines the NAD(+) pocket; it reads GSAPDIAGQQKAD.

This sequence belongs to the isocitrate and isopropylmalate dehydrogenases family. LeuB type 2 subfamily. Homodimer. Mg(2+) is required as a cofactor. The cofactor is Mn(2+).

The protein localises to the cytoplasm. It catalyses the reaction (2R,3S)-3-isopropylmalate + NAD(+) = 4-methyl-2-oxopentanoate + CO2 + NADH. Its pathway is amino-acid biosynthesis; L-leucine biosynthesis; L-leucine from 3-methyl-2-oxobutanoate: step 3/4. Functionally, catalyzes the oxidation of 3-carboxy-2-hydroxy-4-methylpentanoate (3-isopropylmalate) to 3-carboxy-4-methyl-2-oxopentanoate. The product decarboxylates to 4-methyl-2 oxopentanoate. The sequence is that of 3-isopropylmalate dehydrogenase from Clavibacter sepedonicus (Clavibacter michiganensis subsp. sepedonicus).